An 87-amino-acid chain; its full sequence is Small ribosomal subunit protein bS20 (87 aa).

The tract at residues 1–20 is disordered; that stretch reads MANSAQARKRARTALKQRAH. Over residues 7-19 the composition is skewed to basic residues; that stretch reads ARKRARTALKQRA.

The protein belongs to the bacterial ribosomal protein bS20 family.

In terms of biological role, binds directly to 16S ribosomal RNA. In Chromobacterium violaceum (strain ATCC 12472 / DSM 30191 / JCM 1249 / CCUG 213 / NBRC 12614 / NCIMB 9131 / NCTC 9757 / MK), this protein is Small ribosomal subunit protein bS20.